Here is a 386-residue protein sequence, read N- to C-terminus: Aspartate carbamoyltransferase 1, chloroplastic (386 aa).

The transit peptide at 1-39 directs the protein to the chloroplast; that stretch reads MTVASMLSSNSMNVGVSNPKMSSKTSACCLLNRPWPSSC. Residues R132 and T133 each coordinate carbamoyl phosphate. UMP contacts are provided by R132 and T133. Residue K162 participates in L-aspartate binding. R183, H211, and Q214 together coordinate carbamoyl phosphate. Residues R183 and H211 each contribute to the UMP site. UMP contacts are provided by R244 and R306. Residues R244 and R306 each contribute to the L-aspartate site. The carbamoyl phosphate site is built by L346 and P347.

Belongs to the aspartate/ornithine carbamoyltransferase superfamily. ATCase family. As to quaternary structure, homotrimer.

The protein resides in the plastid. Its subcellular location is the chloroplast. It catalyses the reaction carbamoyl phosphate + L-aspartate = N-carbamoyl-L-aspartate + phosphate + H(+). It participates in pyrimidine metabolism; UMP biosynthesis via de novo pathway; (S)-dihydroorotate from bicarbonate: step 2/3. Its activity is regulated as follows. Feedback inhibited by UMP. Its function is as follows. Catalyzes the condensation of carbamoyl phosphate and aspartate to form carbamoyl aspartate and inorganic phosphate, the committed step in the de novo pyrimidine nucleotide biosynthesis pathway. The sequence is that of Aspartate carbamoyltransferase 1, chloroplastic (PYRB1) from Pisum sativum (Garden pea).